A 235-amino-acid polypeptide reads, in one-letter code: 2-C-methyl-D-erythritol 4-phosphate cytidylyltransferase (235 aa).

It belongs to the IspD/TarI cytidylyltransferase family. IspD subfamily.

It carries out the reaction 2-C-methyl-D-erythritol 4-phosphate + CTP + H(+) = 4-CDP-2-C-methyl-D-erythritol + diphosphate. It functions in the pathway isoprenoid biosynthesis; isopentenyl diphosphate biosynthesis via DXP pathway; isopentenyl diphosphate from 1-deoxy-D-xylulose 5-phosphate: step 2/6. Catalyzes the formation of 4-diphosphocytidyl-2-C-methyl-D-erythritol from CTP and 2-C-methyl-D-erythritol 4-phosphate (MEP). The protein is 2-C-methyl-D-erythritol 4-phosphate cytidylyltransferase of Pseudomonas fluorescens (strain SBW25).